Here is a 404-residue protein sequence, read N- to C-terminus: Epoxide hydrolase 1 (404 aa).

The helical transmembrane segment at 74-96 (ILVRLLQFYYFVKFSAILFLGFA) threads the bilayer. An AB hydrolase-1 domain is found at 140–389 (PLMLFIHGYP…ASHWVQQDEP (250 aa)). Catalysis depends on Asp-215, which acts as the Nucleophile. Catalysis depends on Tyr-327, which acts as the Proton donor. The active-site Proton acceptor is His-382.

This sequence belongs to the AB hydrolase superfamily. Epoxide hydrolase family.

Its subcellular location is the membrane. It catalyses the reaction an epoxide + H2O = an ethanediol. It carries out the reaction 8,9-epoxy-(5Z,11Z,14Z)-eicosatrienoate + H2O = 8,9-dihydroxy-(5Z,11Z,14Z)-eicosatrienoate. The catalysed reaction is 11,12-epoxy-(5Z,8Z,14Z)-eicosatrienoate + H2O = 11,12-dihydroxy-(5Z,8Z,14Z)-eicosatrienoate. The enzyme catalyses 14,15-epoxy-(5Z,8Z,11Z)-eicosatrienoate + H2O = 14,15-dihydroxy-(5Z,8Z,11Z)-eicosatrienoate. It catalyses the reaction 12,13-epoxy-(9Z)-octadecenoate + H2O = 12,13-dihydroxy-(9Z)-octadecenoate. It carries out the reaction 9,10-epoxy-(12Z)-octadecenoate + H2O = 9,10-dihydroxy-(12Z)-octadecenoate. It participates in lipid metabolism. In terms of biological role, catalyzes the hydrolysis of epoxide-containing fatty acids. Active against epoxyeicosatrienoic acids (EETs) including 8,9-epoxy-(5Z,11Z,14Z)-eicosatrienoate (8,9-EET), 11,12-epoxy-(5Z,8Z,14Z)-eicosatrienoate (11,12-EET) and 14,15-epoxy-(5Z,8Z,11Z)-eicosatrienoate (14,15-EET) and the linoleic acid metabolites 12,13-epoxy-(9Z)-octadecenoate (12,13-EpOME) and 9,10-epoxy-(12Z)-octadecenoate (9,10-EpOME). These epoxides function as lipid signaling molecules, the enzyme can deplete the supply of the epoxide signal by transforming them into diol species that are more readily eliminated through excretion. The protein is Epoxide hydrolase 1 of Caenorhabditis elegans.